Reading from the N-terminus, the 212-residue chain is Phosphatidylserine decarboxylase proenzyme (212 aa).

Catalysis depends on serine 182, which acts as the Schiff-base intermediate with substrate; via pyruvic acid. The residue at position 182 (serine 182) is a Pyruvic acid (Ser); by autocatalysis.

This sequence belongs to the phosphatidylserine decarboxylase family. PSD-A subfamily. As to quaternary structure, heterodimer of a large membrane-associated beta subunit and a small pyruvoyl-containing alpha subunit. It depends on pyruvate as a cofactor. In terms of processing, is synthesized initially as an inactive proenzyme. Formation of the active enzyme involves a self-maturation process in which the active site pyruvoyl group is generated from an internal serine residue via an autocatalytic post-translational modification. Two non-identical subunits are generated from the proenzyme in this reaction, and the pyruvate is formed at the N-terminus of the alpha chain, which is derived from the carboxyl end of the proenzyme. The post-translation cleavage follows an unusual pathway, termed non-hydrolytic serinolysis, in which the side chain hydroxyl group of the serine supplies its oxygen atom to form the C-terminus of the beta chain, while the remainder of the serine residue undergoes an oxidative deamination to produce ammonia and the pyruvoyl prosthetic group on the alpha chain.

The protein resides in the cell membrane. The catalysed reaction is a 1,2-diacyl-sn-glycero-3-phospho-L-serine + H(+) = a 1,2-diacyl-sn-glycero-3-phosphoethanolamine + CO2. It participates in phospholipid metabolism; phosphatidylethanolamine biosynthesis; phosphatidylethanolamine from CDP-diacylglycerol: step 2/2. Its function is as follows. Catalyzes the formation of phosphatidylethanolamine (PtdEtn) from phosphatidylserine (PtdSer). This is Phosphatidylserine decarboxylase proenzyme from Pelodictyon phaeoclathratiforme (strain DSM 5477 / BU-1).